We begin with the raw amino-acid sequence, 479 residues long: Endosomal/lysosomal proton channel TMEM175 (479 aa).

Residues 1-26 form a disordered region; sequence MSGPQAPEPTLEGQADASAGSPDEDA. Topologically, residues 1–33 are cytoplasmic; sequence MSGPQAPEPTLEGQADASAGSPDEDAAEGIQHS. The chain crosses the membrane as a helical span at residues 34 to 56; it reads HRMLSFSDALLSIIATVMEFDKS. The RxxxFSD motif 1 signature appears at 35–41; it reads RMLSFSD. A short helix H2-1 region spans residues 52 to 58; that stretch reads EFDKSVQ. Over 57–64 the chain is Lumenal; that stretch reads VQRLLATR. Residues 65-87 form a helical membrane-spanning segment; the sequence is IAVYLMTFLIVTVAWAAHTRLFQ. The Cytoplasmic segment spans residues 88-93; that stretch reads VVGKID. Residues 94-103 form a helical membrane-spanning segment; the sequence is DTLALLNLFS. The Lumenal portion of the chain corresponds to 104–113; it reads LMVTFPEVPL. Residues 114 to 135 traverse the membrane as a helical segment; sequence GIFLFCMCVIAIGAVQALIVLY. The Cytoplasmic portion of the chain corresponds to 136–159; sequence AFHFPHLLSPQIERSAHRGLYRQR. A helical membrane pass occupies residues 160 to 180; that stretch reads VLGIIVRGPALCLAAAGFSLF. Residues 181–185 are Lumenal-facing; that stretch reads FYPAS. Residues 186-205 form a helical membrane-spanning segment; it reads YLLMAMVIVLPHVSKAAGWC. At 206–232 the chain is on the cytoplasmic side; sequence RAQLVGPREPPAHSVEVFTFDLHEPLS. Residues 233–257 traverse the membrane as a helical segment; that stretch reads KERVEAFSDGVYAIVATLLILDICE. The RxxxFSD motif 2 motif lies at 235–241; it reads RVEAFSD. The Lumenal portion of the chain corresponds to 258 to 284; that stretch reads DNVPDAKDVKEKFQGSLVAALGESGPH. The interval 263-271 is short helix H1-2; the sequence is AKDVKEKFQ. Positions 273–279 are short helix H2-2; the sequence is SLVAALG. Residues 285-307 form a helical membrane-spanning segment; sequence FLAYFGSFATVGLLWFAHHSLFL. At 308–313 the chain is on the cytoplasmic side; sequence HIRRAT. Residues 314–335 traverse the membrane as a helical segment; it reads QPMGLLNTLSLAFVGGLPLAYQ. Residues 336 to 350 are Lumenal-facing; the sequence is QTSAFTKQPRDELES. Residues 351 to 371 form a helical membrane-spanning segment; sequence VRISCAIIFLASIFQFAIWTT. Residues 372 to 391 lie on the Cytoplasmic side of the membrane; that stretch reads ALLQEGETLQPSARFGGREH. The helical transmembrane segment at 392–415 threads the bilayer; it reads AFMFAKLALYPCASLLAFACTCVL. The Lumenal portion of the chain corresponds to 416–417; that stretch reads SS. Residues 418–444 form a helical membrane-spanning segment; that stretch reads FSTAIFHAMQIAVPFAFLLLRLLVRLA. Topologically, residues 445 to 479 are cytoplasmic; the sequence is LAGLRALRGLVGPVLARPAPGAADEAQSPLLPAPC.

The protein belongs to the TMEM175 family. Homodimer. Interacts with AKT (AKT1, AKT2 or AKT3); leading to formation of the lysoK(GF) complex, which activates the channel. Interacts with LAMP1; inhibiting the proton channel activity of TMEM175. Interacts with LAMP2; inhibiting the proton channel activity of TMEM175.

Its subcellular location is the endosome membrane. The protein localises to the lysosome membrane. The catalysed reaction is H(+)(in) = H(+)(out). The enzyme catalyses K(+)(in) = K(+)(out). Active at low pH (under pH 4.6): proton channel activity is activated by luminal side protons. Polyunsaturated fatty acids, such as arachidonic acid, also activate the channel activity. Proton channel activity is directly inhibited by LAMP1 or LAMP2, facilitating lysosomal acidification. Channel activity is activated following interaction with AKT (AKT1, AKT2 or AKT3): interaction promotes activation from closed to an open state. Activation by AKT is independent of AKT serine/threonine-protein kinase activity. In terms of biological role, proton-activated proton channel that catalyzes proton efflux from endosomes and lysosomes to maintain a steady-state pH. Activated at low pH (under pH 4.6) by luminal side protons: selectively mediates lysosomal proton release from lysosomes, eliciting a proton leak that balances V-ATPase activity to maintain pH homeostasis. Regulation of lumenal pH stability is required for autophagosome-lysosome fusion. Also acts as a potassium channel at higher pH, regulating potassium conductance in endosomes and lysosomes. Constitutes the pore-forming subunit of the lysoK(GF) complex, a complex activated by extracellular growth factors. The lysoK(GF) complex is composed of TMEM175 and AKT (AKT1, AKT2 or AKT3), a major target of growth factor receptors: in the complex, TMEM175 channel is opened by conformational changes by AKT, leading to its activation. The lysoK(GF) complex is required to protect neurons against stress-induced damage. The sequence is that of Endosomal/lysosomal proton channel TMEM175 from Bos taurus (Bovine).